We begin with the raw amino-acid sequence, 518 residues long: MSPQESSVQPSQFLLLVGIPVASALLLAQCLRWHCCQWLPGTCRKPDDPEEPVSPSTPLPEYELPRQCPAPTLPEVAAFYQELHMPTQGQTVTRQMMHKLLVFSAREVDHRGGCLILQDTGISLLIPPGAVTVGRQERVSLVLVWDLTDAPSLSHRQGLVSPVVACGPHGASFLKPCTLTFKHCAQQPSQACAYSSNTSLLDAKDWKPLGQPGTHISRDECRILLSHFSLYTCVLEAPLGQTARKWLQLAMFCSPLVPGQTHLQLRVYFLNNTPCALQWAITNEQPHGGRMRGPCQLFDFTGARADQCLKLKYISEGWENVDDSSSQLVPHLHIWHGKCPFRSFCFRRKAANGNEECSALTNEIIVTMHTFQDGLETKYVEILRFQASEEETWAVPPPVSQPPLCNRLPPELFEQLQMLLEPNSVTGNDWRRLASHLGLCGMKIRFLSCQRSPAAAILELFEEQNGSLQELHYLMTSMERLDCASAIQNYLNRSPRGSPDRLHGGTWENHGLELDEKL.

Over 1 to 10 the chain is Extracellular; that stretch reads MSPQESSVQP. Residues 11 to 31 form a helical; Signal-anchor for type III membrane protein membrane-spanning segment; sequence SQFLLLVGIPVASALLLAQCL. At 32 to 518 the chain is on the cytoplasmic side; the sequence is RWHCCQWLPG…NHGLELDEKL (487 aa). Residues 102–237 form the ZU5 domain; it reads VFSAREVDHR…FSLYTCVLEA (136 aa). The tract at residues 186-400 is interaction with RELA and NFKB1; it reads QQPSQACAYS…ETWAVPPPVS (215 aa). Positions 208-235 are peptidase S68; that stretch reads PLGQPGTHISRDECRILLSHFSLYTCVL. Catalysis depends on residues H227 and S229. One can recognise a Death domain in the interval 415-494; sequence QLQMLLEPNS…SAIQNYLNRS (80 aa).

Belongs to the unc-5 family. In terms of assembly, interacts with p65/RELA and NFKB1.

It localises to the membrane. Its subcellular location is the cytoplasm. Inhibits NF-kappa-B-dependent transcription by impairing NF-kappa-B binding to its targets. The protein is UNC5C-like protein (Unc5cl) of Mus musculus (Mouse).